Reading from the N-terminus, the 273-residue chain is 4-hydroxy-tetrahydrodipicolinate reductase 1 (273 aa).

NAD(+)-binding positions include 13 to 18 and Glu39; that span reads GAAGRM. Arg40 is an NADP(+) binding site. Residues 103-105 and 127-130 each bind NAD(+); these read GTT and SGNM. Catalysis depends on His161, which acts as the Proton donor/acceptor. Position 162 (His162) interacts with (S)-2,3,4,5-tetrahydrodipicolinate. Lys165 acts as the Proton donor in catalysis. 171–172 is a binding site for (S)-2,3,4,5-tetrahydrodipicolinate; the sequence is GT.

It belongs to the DapB family.

The protein resides in the cytoplasm. It catalyses the reaction (S)-2,3,4,5-tetrahydrodipicolinate + NAD(+) + H2O = (2S,4S)-4-hydroxy-2,3,4,5-tetrahydrodipicolinate + NADH + H(+). The catalysed reaction is (S)-2,3,4,5-tetrahydrodipicolinate + NADP(+) + H2O = (2S,4S)-4-hydroxy-2,3,4,5-tetrahydrodipicolinate + NADPH + H(+). It participates in amino-acid biosynthesis; L-lysine biosynthesis via DAP pathway; (S)-tetrahydrodipicolinate from L-aspartate: step 4/4. Its function is as follows. Catalyzes the conversion of 4-hydroxy-tetrahydrodipicolinate (HTPA) to tetrahydrodipicolinate. This Mesorhizobium japonicum (strain LMG 29417 / CECT 9101 / MAFF 303099) (Mesorhizobium loti (strain MAFF 303099)) protein is 4-hydroxy-tetrahydrodipicolinate reductase 1.